A 178-amino-acid polypeptide reads, in one-letter code: ATP-dependent protease subunit HslV (178 aa).

T7 is a catalytic residue. The Na(+) site is built by G162, C165, and T168.

This sequence belongs to the peptidase T1B family. HslV subfamily. As to quaternary structure, a double ring-shaped homohexamer of HslV is capped on each side by a ring-shaped HslU homohexamer. The assembly of the HslU/HslV complex is dependent on binding of ATP.

The protein resides in the cytoplasm. The catalysed reaction is ATP-dependent cleavage of peptide bonds with broad specificity.. Its activity is regulated as follows. Allosterically activated by HslU binding. Protease subunit of a proteasome-like degradation complex believed to be a general protein degrading machinery. The sequence is that of ATP-dependent protease subunit HslV from Burkholderia lata (strain ATCC 17760 / DSM 23089 / LMG 22485 / NCIMB 9086 / R18194 / 383).